The following is an 84-amino-acid chain: Cell division topological specificity factor (84 aa).

This sequence belongs to the MinE family.

In terms of biological role, prevents the cell division inhibition by proteins MinC and MinD at internal division sites while permitting inhibition at polar sites. This ensures cell division at the proper site by restricting the formation of a division septum at the midpoint of the long axis of the cell. The chain is Cell division topological specificity factor from Granulibacter bethesdensis (strain ATCC BAA-1260 / CGDNIH1).